A 227-amino-acid polypeptide reads, in one-letter code: Small ribosomal subunit protein uS7 (227 aa).

2 stretches are compositionally biased toward acidic residues: residues 1 to 12 and 20 to 31; these read MSESDTDPDIDD and NDVDVAVDESES. The tract at residues 1–43 is disordered; the sequence is MSESDTDPDIDDDAHNNGDNDVDVAVDESESAETTTDTDTASA. Low complexity predominate over residues 32 to 43; it reads AETTTDTDTASA.

The protein belongs to the universal ribosomal protein uS7 family. As to quaternary structure, part of the 30S ribosomal subunit.

One of the primary rRNA binding proteins, it binds directly to 16S rRNA where it nucleates assembly of the head domain of the 30S subunit. Is located at the subunit interface close to the decoding center. The sequence is that of Small ribosomal subunit protein uS7 from Haloquadratum walsbyi (strain DSM 16790 / HBSQ001).